A 517-amino-acid chain; its full sequence is Maturase K (517 aa).

The protein belongs to the intron maturase 2 family. MatK subfamily.

The protein resides in the plastid. Its subcellular location is the chloroplast. Its function is as follows. Usually encoded in the trnK tRNA gene intron. Probably assists in splicing its own and other chloroplast group II introns. The sequence is that of Maturase K from Phalaenopsis japonica (Orchid).